The chain runs to 461 residues: Phytase PHO112 (461 aa).

Cystine bridges form between Cys62-Cys384, Cys261-Cys274, and Cys404-Cys412. 1D-myo-inositol hexakisphosphate contacts are provided by Arg72, His73, Arg76, and Ser79. His73 serves as the catalytic Nucleophile. Residues Asn97 and Asn157 are each glycosylated (N-linked (GlcNAc...) asparagine). Arg169 serves as a coordination point for 1D-myo-inositol hexakisphosphate. Asn229 and Asn248 each carry an N-linked (GlcNAc...) asparagine glycan. A 1D-myo-inositol hexakisphosphate-binding site is contributed by Lys293. 2 N-linked (GlcNAc...) asparagine glycosylation sites follow: Asn302 and Asn313. 2 residues coordinate 1D-myo-inositol hexakisphosphate: His334 and Asp335. 2 N-linked (GlcNAc...) asparagine glycosylation sites follow: Asn437 and Asn452.

It belongs to the histidine acid phosphatase family. In terms of assembly, monomer.

The protein localises to the secreted. It catalyses the reaction 1D-myo-inositol hexakisphosphate + H2O = 1D-myo-inositol 1,2,4,5,6-pentakisphosphate + phosphate. It carries out the reaction 1D-myo-inositol 1,2,4,5,6-pentakisphosphate + H2O = 1D-myo-inositol 1,2,5,6-tetrakisphosphate + phosphate. The enzyme catalyses 1D-myo-inositol 1,2,5,6-tetrakisphosphate + H2O = 1D-myo-inositol 1,2,6-trisphosphate + phosphate. The catalysed reaction is 1D-myo-inositol 1,2,6-trisphosphate + H2O = 1D-myo-inositol 1,2-bisphosphate + phosphate. It catalyses the reaction 1D-myo-inositol 1,2-bisphosphate + H2O = 1D-myo-inositol 2-phosphate + phosphate. Its function is as follows. Catalyzes the phosphate monoester hydrolysis of phytic acid (myo-inositol hexakisphosphate), which results in the stepwise formation of myo-inositol pentakis-, tetrakis-, tris-, bis-, and monophosphates, as well as the liberation of inorganic phosphate. Myo-inositol 2-monophosphate is the end product. Responsible of about 25% of the phytase activity. The residual phytase activity might be contributed by other cytosolic or cellular enzymes such as acid phosphatase that also degraded the substrate phytate. Is essential for human tissue damage during infection. The protein is Phytase PHO112 (PHO112) of Candida albicans (strain SC5314 / ATCC MYA-2876) (Yeast).